The sequence spans 417 residues: Serine hydroxymethyltransferase 1 (417 aa).

(6S)-5,6,7,8-tetrahydrofolate-binding positions include Leu121 and Gly125 to Leu127. Lys229 carries the post-translational modification N6-(pyridoxal phosphate)lysine. Ser354–Phe356 is a (6S)-5,6,7,8-tetrahydrofolate binding site.

This sequence belongs to the SHMT family. Homodimer. Pyridoxal 5'-phosphate is required as a cofactor.

It localises to the cytoplasm. The catalysed reaction is (6R)-5,10-methylene-5,6,7,8-tetrahydrofolate + glycine + H2O = (6S)-5,6,7,8-tetrahydrofolate + L-serine. The protein operates within one-carbon metabolism; tetrahydrofolate interconversion. Its pathway is amino-acid biosynthesis; glycine biosynthesis; glycine from L-serine: step 1/1. In terms of biological role, catalyzes the reversible interconversion of serine and glycine with tetrahydrofolate (THF) serving as the one-carbon carrier. This reaction serves as the major source of one-carbon groups required for the biosynthesis of purines, thymidylate, methionine, and other important biomolecules. Also exhibits THF-independent aldolase activity toward beta-hydroxyamino acids, producing glycine and aldehydes, via a retro-aldol mechanism. The polypeptide is Serine hydroxymethyltransferase 1 (Pseudomonas savastanoi pv. phaseolicola (strain 1448A / Race 6) (Pseudomonas syringae pv. phaseolicola (strain 1448A / Race 6))).